Here is a 188-residue protein sequence, read N- to C-terminus: GTP cyclohydrolase 1 (188 aa).

Positions 78, 81, and 150 each coordinate Zn(2+).

It belongs to the GTP cyclohydrolase I family. In terms of assembly, homomer.

The enzyme catalyses GTP + H2O = 7,8-dihydroneopterin 3'-triphosphate + formate + H(+). It participates in cofactor biosynthesis; 7,8-dihydroneopterin triphosphate biosynthesis; 7,8-dihydroneopterin triphosphate from GTP: step 1/1. This Geobacillus sp. (strain WCH70) protein is GTP cyclohydrolase 1.